The following is a 188-amino-acid chain: MRVMGVDPGLTRCGLSLIESGRGRQLTALDVDVVRTPSDAALAQRLLAISDAVEHWLDTHHPEVVAIERVFSQLNVTTVMGTAQAGGVIALAAAKRGVDVHFHTPSEVKAAVTGNGSADKAQVTAMVTKILALQAKPTPADAADALALAICHCWRAPTIARMAEATSRAEARAAQQRHAYLAKLKAAR.

Catalysis depends on residues Asp-7, Glu-68, and Asp-141. Residues Asp-7, Glu-68, and Asp-141 each contribute to the Mg(2+) site.

This sequence belongs to the RuvC family. Homodimer which binds Holliday junction (HJ) DNA. The HJ becomes 2-fold symmetrical on binding to RuvC with unstacked arms; it has a different conformation from HJ DNA in complex with RuvA. In the full resolvosome a probable DNA-RuvA(4)-RuvB(12)-RuvC(2) complex forms which resolves the HJ. Requires Mg(2+) as cofactor.

The protein resides in the cytoplasm. It catalyses the reaction Endonucleolytic cleavage at a junction such as a reciprocal single-stranded crossover between two homologous DNA duplexes (Holliday junction).. In terms of biological role, the RuvA-RuvB-RuvC complex processes Holliday junction (HJ) DNA during genetic recombination and DNA repair. Endonuclease that resolves HJ intermediates. Cleaves cruciform DNA by making single-stranded nicks across the HJ at symmetrical positions within the homologous arms, yielding a 5'-phosphate and a 3'-hydroxyl group; requires a central core of homology in the junction. The consensus cleavage sequence is 5'-(A/T)TT(C/G)-3'. Cleavage occurs on the 3'-side of the TT dinucleotide at the point of strand exchange. HJ branch migration catalyzed by RuvA-RuvB allows RuvC to scan DNA until it finds its consensus sequence, where it cleaves and resolves the cruciform DNA. In Mycobacterium tuberculosis (strain ATCC 25177 / H37Ra), this protein is Crossover junction endodeoxyribonuclease RuvC.